We begin with the raw amino-acid sequence, 737 residues long: DNA topoisomerase 4 subunit A (737 aa).

In terms of domain architecture, Topo IIA-type catalytic spans 32–496 (LPDVRDGLKP…SFEEVTLTNQ (465 aa)). Residue Tyr-120 is the O-(5'-phospho-DNA)-tyrosine intermediate of the active site.

Belongs to the type II topoisomerase GyrA/ParC subunit family. ParC type 1 subfamily. In terms of assembly, heterotetramer composed of ParC and ParE.

The protein localises to the cell membrane. The catalysed reaction is ATP-dependent breakage, passage and rejoining of double-stranded DNA.. In terms of biological role, topoisomerase IV is essential for chromosome segregation. It relaxes supercoiled DNA. Performs the decatenation events required during the replication of a circular DNA molecule. The polypeptide is DNA topoisomerase 4 subunit A (Rickettsia felis (strain ATCC VR-1525 / URRWXCal2) (Rickettsia azadi)).